The sequence spans 287 residues: Elongation factor Ts (287 aa).

The tract at residues 80–83 (TDFL) is involved in Mg(2+) ion dislocation from EF-Tu.

The protein belongs to the EF-Ts family.

The protein localises to the cytoplasm. Its function is as follows. Associates with the EF-Tu.GDP complex and induces the exchange of GDP to GTP. It remains bound to the aminoacyl-tRNA.EF-Tu.GTP complex up to the GTP hydrolysis stage on the ribosome. In Pseudomonas putida (strain ATCC 47054 / DSM 6125 / CFBP 8728 / NCIMB 11950 / KT2440), this protein is Elongation factor Ts.